The chain runs to 356 residues: Histidinol-phosphate aminotransferase (356 aa).

N6-(pyridoxal phosphate)lysine is present on lysine 214.

Belongs to the class-II pyridoxal-phosphate-dependent aminotransferase family. Histidinol-phosphate aminotransferase subfamily. Homodimer. Pyridoxal 5'-phosphate is required as a cofactor.

The catalysed reaction is L-histidinol phosphate + 2-oxoglutarate = 3-(imidazol-4-yl)-2-oxopropyl phosphate + L-glutamate. The protein operates within amino-acid biosynthesis; L-histidine biosynthesis; L-histidine from 5-phospho-alpha-D-ribose 1-diphosphate: step 7/9. The protein is Histidinol-phosphate aminotransferase of Escherichia coli O45:K1 (strain S88 / ExPEC).